A 187-amino-acid polypeptide reads, in one-letter code: Large ribosomal subunit protein uL5 (187 aa).

This sequence belongs to the universal ribosomal protein uL5 family. Part of the 50S ribosomal subunit; part of the 5S rRNA/L5/L18/L25 subcomplex. Contacts the 5S rRNA and the P site tRNA. Forms a bridge to the 30S subunit in the 70S ribosome.

Functionally, this is one of the proteins that bind and probably mediate the attachment of the 5S RNA into the large ribosomal subunit, where it forms part of the central protuberance. In the 70S ribosome it contacts protein S13 of the 30S subunit (bridge B1b), connecting the 2 subunits; this bridge is implicated in subunit movement. Contacts the P site tRNA; the 5S rRNA and some of its associated proteins might help stabilize positioning of ribosome-bound tRNAs. The polypeptide is Large ribosomal subunit protein uL5 (Saccharopolyspora erythraea (strain ATCC 11635 / DSM 40517 / JCM 4748 / NBRC 13426 / NCIMB 8594 / NRRL 2338)).